A 532-amino-acid polypeptide reads, in one-letter code: 4-amino-L-phenylalanyl-[CmlP-peptidyl-carrier-protein] 3-hydroxylase (532 aa).

Positions 305, 307, 309, 310, 377, and 403 each coordinate Fe cation.

It belongs to the metallo-beta-lactamase superfamily. Homodimer. It depends on Fe(2+) as a cofactor.

It carries out the reaction 4-amino-L-phenylalanyl-[peptidyl-carrier protein] + AH2 + O2 = (2R)-2-(4-aminophenyl)-L-seryl-[peptidyl-carrier protein] + A + H2O. Its pathway is antibiotic biosynthesis. In terms of biological role, involved in chloramphenicol biosynthesis. Catalyzes the beta-hydroxylation of 4-amino-L-phenylalanine (L-PAPA) covalently bound to CmlP to form L-p-aminophenylserine. The sequence is that of 4-amino-L-phenylalanyl-[CmlP-peptidyl-carrier-protein] 3-hydroxylase from Streptomyces venezuelae (strain ATCC 10712 / CBS 650.69 / DSM 40230 / JCM 4526 / NBRC 13096 / PD 04745).